Consider the following 307-residue polypeptide: Serine/threonine-protein phosphatase 4 catalytic subunit (307 aa).

Position 2 is an N-acetylalanine (Ala-2). Asp-54, His-56, Asp-82, and Asn-114 together coordinate Mn(2+). His-115 functions as the Proton donor in the catalytic mechanism. Mn(2+) is bound by residues His-164 and His-238. The residue at position 307 (Leu-307) is a Leucine methyl ester.

The protein belongs to the PPP phosphatase family. PP-4 (PP-X) subfamily. As to quaternary structure, serine/threonine-protein phosphatase 4 (PP4) occurs in different assemblies of the catalytic and one or more regulatory subunits. Component of the PP4 complexes PPP4C-PPP4R1, PPP4C-PPP4R2, PPP4C-PPP4R2-PPP4R3A, PPP4C-PPP4R2-PPP4R3B and PPP4C-PPP4R4. The PPP4C-PPP4R2 complex appears to be a tetramer composed of 2 molecules of PPP4C and 2 molecules of PPP4R2. Interacts with REL, NFKB1/p50 and RELA. Interacts with SMN1 and GEMIN4. Interacts with IRS4 (phosphorylated). Interacts with SMEK1/PPP4R3A; the interaction requires PP4R2. Interacts with HDAC3. Requires Mn(2+) as cofactor. Post-translationally, methylation at the C-terminal Leu-307 is critical for interactions with regulatory subunits and functions in DNA repair.

It is found in the cytoplasm. Its subcellular location is the nucleus. The protein localises to the cytoskeleton. The protein resides in the microtubule organizing center. It localises to the centrosome. It catalyses the reaction O-phospho-L-seryl-[protein] + H2O = L-seryl-[protein] + phosphate. The catalysed reaction is O-phospho-L-threonyl-[protein] + H2O = L-threonyl-[protein] + phosphate. Protein phosphatase that is involved in many processes such as microtubule organization at centrosomes, maturation of spliceosomal snRNPs, apoptosis, DNA repair, tumor necrosis factor (TNF)-alpha signaling, activation of c-Jun N-terminal kinase MAPK8, regulation of histone acetylation, DNA damage checkpoint signaling, NF-kappa-B activation and cell migration. The PPP4C-PPP4R1 PP4 complex may play a role in dephosphorylation and regulation of HDAC3. The PPP4C-PPP4R2-PPP4R3A PP4 complex specifically dephosphorylates H2AX phosphorylated on Ser-140 (gamma-H2AX) generated during DNA replication and required for DNA DSB repair. Dephosphorylates NDEL1 at CDK1 phosphorylation sites and negatively regulates CDK1 activity in interphase. In response to DNA damage, catalyzes RPA2 dephosphorylation, an essential step for DNA repair since it allows the efficient RPA2-mediated recruitment of RAD51 to chromatin. This chain is Serine/threonine-protein phosphatase 4 catalytic subunit (PPP4C), found in Oryctolagus cuniculus (Rabbit).